A 414-amino-acid chain; its full sequence is TAR DNA-binding protein 43 (414 aa).

Residues Lys79, Lys84, Lys95, Lys102, and Lys181 each participate in a glycyl lysine isopeptide (Lys-Gly) (interchain with G-Cter in SUMO2) cross-link. RRM domains lie at 104–200 (SDLI…RCTE) and 191–262 (RKVF…NAEP). Ser183 is modified (phosphoserine). The interaction with UBQLN2 stretch occupies residues 216-414 (EVVDVFIPKP…MDSKSSGWGM (199 aa)). Residues 261 to 274 (EPKHNSNRQLERSG) show a composition bias toward basic and acidic residues. Disordered regions lie at residues 261 to 301 (EPKH…GLGN) and 341 to 414 (ASQQ…GWGM). Lys263 is covalently cross-linked (Glycyl lysine isopeptide (Lys-Gly) (interchain with G-Cter in SUMO2)). Positions 275 to 301 (RFGGNPGGFGNQGGFGNSRGGGAGLGN) are enriched in gly residues. Ser292 is subject to Phosphoserine. At Arg293 the chain carries Omega-N-methylarginine. 2 stretches are compositionally biased toward low complexity: residues 342–358 (SQQNQSGPSGNNQSQGS) and 368–392 (GSGNNSYSGSNSGAPLGWGSASNAG). The segment covering 393–402 (SGSGFNGGFG) has biased composition (gly residues). Over residues 405 to 414 (MDSKSSGWGM) the composition is skewed to polar residues.

Homodimer. Homooligomer (via its N-terminal domain). Interacts with BRDT. Binds specifically to pyrimidine-rich motifs of TAR DNA and to single stranded TG repeated sequences. Binds to RNA, specifically to UG repeated sequences with a minimum of six contiguous repeats. Interacts with ATXN2; the interaction is RNA-dependent. Interacts with MATR3. Interacts with UBQLN2. Interacts with HNRNPA2B1. Interacts with ZNF106. Interacts with CNOT7/CAF1. Interacts with CRY2. Interacts with PPIA/CYPA; the interaction is dependent on RNA-binding activity of TARDBP and PPIase activity of PPIA/CYPA. Acetylation of PPIA/CYPA at 'Lys-125' favors the interaction of TARDBP with PPIA/CYPA. Hyperphosphorylated. In terms of processing, ubiquitinated.

The protein resides in the nucleus. It is found in the cytoplasm. It localises to the stress granule. Its subcellular location is the mitochondrion. Functionally, RNA-binding protein that is involved in various steps of RNA biogenesis and processing. Preferentially binds, via its two RNA recognition motifs RRM1 and RRM2, to GU-repeats on RNA molecules predominantly localized within long introns and in the 3'UTR of mRNAs. In turn, regulates the splicing of many non-coding and protein-coding RNAs including proteins involved in neuronal survival, as well as mRNAs that encode proteins relevant for neurodegenerative diseases. Plays a role in maintaining mitochondrial homeostasis by regulating the processing of mitochondrial transcripts. Also regulates mRNA stability by recruiting CNOT7/CAF1 deadenylase on mRNA 3'UTR leading to poly(A) tail deadenylation and thus shortening. In response to oxidative insult, associates with stalled ribosomes localized to stress granules (SGs) and contributes to cell survival. Also participates in the normal skeletal muscle formation and regeneration, forming cytoplasmic myo-granules and binding mRNAs that encode sarcomeric proteins. Plays a role in the maintenance of the circadian clock periodicity via stabilization of the CRY1 and CRY2 proteins in a FBXL3-dependent manner. Negatively regulates the expression of CDK6. Regulates the expression of HDAC6, ATG7 and VCP in a PPIA/CYPA-dependent manner. This chain is TAR DNA-binding protein 43 (Tardbp), found in Mus musculus (Mouse).